The primary structure comprises 329 residues: Beta-ketoacyl-[acyl-carrier-protein] synthase III (329 aa).

Active-site residues include Cys-123 and His-256. The segment at 257 to 261 (QANIR) is ACP-binding. Asn-286 is an active-site residue.

The protein belongs to the thiolase-like superfamily. FabH family. Homodimer.

The protein localises to the cytoplasm. It catalyses the reaction malonyl-[ACP] + acetyl-CoA + H(+) = 3-oxobutanoyl-[ACP] + CO2 + CoA. Its pathway is lipid metabolism; fatty acid biosynthesis. Its function is as follows. Catalyzes the condensation reaction of fatty acid synthesis by the addition to an acyl acceptor of two carbons from malonyl-ACP. Catalyzes the first condensation reaction which initiates fatty acid synthesis and may therefore play a role in governing the total rate of fatty acid production. Possesses both acetoacetyl-ACP synthase and acetyl transacylase activities. Its substrate specificity determines the biosynthesis of branched-chain and/or straight-chain of fatty acids. The chain is Beta-ketoacyl-[acyl-carrier-protein] synthase III from Burkholderia orbicola (strain AU 1054).